The following is a 1934-amino-acid chain: Tudor domain-containing protein 15 (1934 aa).

Tudor domains lie at 59 to 117 (NVEI…LFEL), 289 to 347 (CDNF…FILV), 531 to 589 (KPEP…FCEL), 799 to 856 (PYEI…FLLL), 1011 to 1070 (DSNK…FPEL), and 1342 to 1401 (KPLV…FLTV). The interval 1490-1510 (VRPGDNEMKKGKSNESEGSMN) is disordered. The segment covering 1491–1504 (RPGDNEMKKGKSNE) has biased composition (basic and acidic residues). Tudor domains lie at 1574–1633 (SIEK…IRNI) and 1780–1838 (FIIP…PEEL).

This chain is Tudor domain-containing protein 15 (TDRD15), found in Homo sapiens (Human).